The sequence spans 393 residues: Formate-dependent phosphoribosylglycinamide formyltransferase (393 aa).

Residues 22-23 (EL) and glutamate 82 contribute to the N(1)-(5-phospho-beta-D-ribosyl)glycinamide site. Residues arginine 114, lysine 155, 160–165 (SSGKGQ), 195–198 (EGFI), and glutamate 203 contribute to the ATP site. In terms of domain architecture, ATP-grasp spans 119–308 (RLAAEELDLP…QFALHARAIL (190 aa)). Positions 267 and 279 each coordinate Mg(2+). N(1)-(5-phospho-beta-D-ribosyl)glycinamide is bound by residues aspartate 286, lysine 356, and 363–364 (RR).

Belongs to the PurK/PurT family. In terms of assembly, homodimer.

It catalyses the reaction N(1)-(5-phospho-beta-D-ribosyl)glycinamide + formate + ATP = N(2)-formyl-N(1)-(5-phospho-beta-D-ribosyl)glycinamide + ADP + phosphate + H(+). It participates in purine metabolism; IMP biosynthesis via de novo pathway; N(2)-formyl-N(1)-(5-phospho-D-ribosyl)glycinamide from N(1)-(5-phospho-D-ribosyl)glycinamide (formate route): step 1/1. Its function is as follows. Involved in the de novo purine biosynthesis. Catalyzes the transfer of formate to 5-phospho-ribosyl-glycinamide (GAR), producing 5-phospho-ribosyl-N-formylglycinamide (FGAR). Formate is provided by PurU via hydrolysis of 10-formyl-tetrahydrofolate. This chain is Formate-dependent phosphoribosylglycinamide formyltransferase, found in Pseudomonas fluorescens (strain Pf0-1).